We begin with the raw amino-acid sequence, 295 residues long: Ethanolamine ammonia-lyase small subunit (295 aa).

Positions 207, 228, and 258 each coordinate adenosylcob(III)alamin.

Belongs to the EutC family. As to quaternary structure, the basic unit is a heterodimer which dimerizes to form tetramers. The heterotetramers trimerize; 6 large subunits form a core ring with 6 small subunits projecting outwards. Adenosylcob(III)alamin serves as cofactor.

It localises to the bacterial microcompartment. It carries out the reaction ethanolamine = acetaldehyde + NH4(+). Its pathway is amine and polyamine degradation; ethanolamine degradation. Its function is as follows. Catalyzes the deamination of various vicinal amino-alcohols to oxo compounds. Allows this organism to utilize ethanolamine as the sole source of nitrogen and carbon in the presence of external vitamin B12. This Escherichia coli O7:K1 (strain IAI39 / ExPEC) protein is Ethanolamine ammonia-lyase small subunit.